Here is a 499-residue protein sequence, read N- to C-terminus: MGSHSVEFSVLVLFLVSFLLGSTSAEKLCSDNDGDNGCFRSRVLAAQRADRVKELPGQPPVKFRQYAGYVTVNETHGRALFYWFFEATQNPSKKPVLLWLNGGPGCSSIGFGAAEELGPFFPQNSSQPKLKLNPYSWNKAANLLFLESPVGVGFSYTNTSRDIKQLGDTVTARDSYNFLVNWFKRFPQYKSHDFYIAGESYAGHYVPQLSELIYKENKIASKKDFINLKGLMIGNALLDDETDQKGMIEYAWDHAVISDALYEKVNKNCDFKQKLVTKECNDALDEYFDVYKILDMYSLYAPKCVPTSTNSSTSHSVAGNRPLPAFRSILRPRLISHNEGWRRMAAGYDPCASEYTEKYMNRKDVQEALHANVTNISYPWTHCSDTVSFWSDAPASMLPTLRTLVSAGLRVWVFSGDTDGRIPVTATRYSLKKLGLKIVQDWTPWYTKLQVGGWTVEYDGLMFVTVRGAGHQVPTFKPREALQLIHHFLGNKKLPTFPF.

The first 25 residues, 1 to 25 (MGSHSVEFSVLVLFLVSFLLGSTSA), serve as a signal peptide directing secretion. Residues Asn73, Asn124, and Asn158 are each glycosylated (N-linked (GlcNAc...) asparagine). Disulfide bonds link Cys106/Cys383, Cys269/Cys280, and Cys304/Cys351. Ser200 is an active-site residue. 3 N-linked (GlcNAc...) asparagine glycosylation sites follow: Asn310, Asn372, and Asn375. Residues Asp419 and His471 contribute to the active site.

This sequence belongs to the peptidase S10 family. As to expression, ubiquitous.

It is found in the secreted. Its function is as follows. Probable carboxypeptidase. The polypeptide is Serine carboxypeptidase-like 34 (SCPL34) (Arabidopsis thaliana (Mouse-ear cress)).